The following is a 583-amino-acid chain: GTP diphosphokinase CRSH1, chloroplastic (583 aa).

Residues 1 to 13 (MATAATTSAAAIP) show a composition bias toward low complexity. The disordered stretch occupies residues 1 to 68 (MATAATTSAA…SSSSSTPAEG (68 aa)). Residues 1–69 (MATAATTSAA…SSSSTPAEGG (69 aa)) constitute a chloroplast transit peptide. The segment covering 19-39 (RRQHPHPRRPGLRPRRLHRLR) has biased composition (basic residues). The segment covering 40 to 66 (LPAQAAAAAAASSPSTSSSSSSSSTPA) has biased composition (low complexity). An HD domain is found at 119 to 219 (ALARALAIAA…LELALKLDMM (101 aa)). 2 consecutive EF-hand domains span residues 473 to 508 (GDSN…LGAG) and 510 to 542 (KDAK…IELM). Positions 486, 488, 490, 492, 497, 520, 522, 524, 526, and 531 each coordinate Ca(2+).

The protein belongs to the RelA/SpoT family. Expressed in roots and shoots.

Its subcellular location is the plastid. The protein localises to the chloroplast. The enzyme catalyses GTP + ATP = guanosine 3'-diphosphate 5'-triphosphate + AMP. Activated by calcium. Functionally, possesses calcium-dependent ppGpp (guanosine 3'-diphosphate 5'-diphosphate) synthetase activity in vitro and is able to functionally complement E.coli relA mutants. May be involved in a rapid plant ppGpp-mediated response to pathogens and other stresses. The chain is GTP diphosphokinase CRSH1, chloroplastic from Oryza sativa subsp. japonica (Rice).